A 367-amino-acid chain; its full sequence is Phosphoribosylaminoimidazole-succinocarboxamide synthase (367 aa).

It belongs to the SAICAR synthetase family.

It catalyses the reaction 5-amino-1-(5-phospho-D-ribosyl)imidazole-4-carboxylate + L-aspartate + ATP = (2S)-2-[5-amino-1-(5-phospho-beta-D-ribosyl)imidazole-4-carboxamido]succinate + ADP + phosphate + 2 H(+). It functions in the pathway purine metabolism; IMP biosynthesis via de novo pathway; 5-amino-1-(5-phospho-D-ribosyl)imidazole-4-carboxamide from 5-amino-1-(5-phospho-D-ribosyl)imidazole-4-carboxylate: step 1/2. The polypeptide is Phosphoribosylaminoimidazole-succinocarboxamide synthase (Aliivibrio fischeri (strain ATCC 700601 / ES114) (Vibrio fischeri)).